The following is a 129-amino-acid chain: Small ribosomal subunit protein uS11 (129 aa).

The protein belongs to the universal ribosomal protein uS11 family. As to quaternary structure, part of the 30S ribosomal subunit. Interacts with proteins S7 and S18. Binds to IF-3.

Its function is as follows. Located on the platform of the 30S subunit, it bridges several disparate RNA helices of the 16S rRNA. Forms part of the Shine-Dalgarno cleft in the 70S ribosome. The protein is Small ribosomal subunit protein uS11 of Hamiltonella defensa subsp. Acyrthosiphon pisum (strain 5AT).